We begin with the raw amino-acid sequence, 256 residues long: Thiazole synthase (256 aa).

The Schiff-base intermediate with DXP role is filled by lysine 98. 1-deoxy-D-xylulose 5-phosphate contacts are provided by residues glycine 159, 185–186 (AG), and 207–208 (NT).

Belongs to the ThiG family. As to quaternary structure, homotetramer. Forms heterodimers with either ThiH or ThiS.

The protein resides in the cytoplasm. The catalysed reaction is [ThiS sulfur-carrier protein]-C-terminal-Gly-aminoethanethioate + 2-iminoacetate + 1-deoxy-D-xylulose 5-phosphate = [ThiS sulfur-carrier protein]-C-terminal Gly-Gly + 2-[(2R,5Z)-2-carboxy-4-methylthiazol-5(2H)-ylidene]ethyl phosphate + 2 H2O + H(+). It functions in the pathway cofactor biosynthesis; thiamine diphosphate biosynthesis. In terms of biological role, catalyzes the rearrangement of 1-deoxy-D-xylulose 5-phosphate (DXP) to produce the thiazole phosphate moiety of thiamine. Sulfur is provided by the thiocarboxylate moiety of the carrier protein ThiS. In vitro, sulfur can be provided by H(2)S. This Aliivibrio fischeri (strain MJ11) (Vibrio fischeri) protein is Thiazole synthase.